The primary structure comprises 85 residues: Prosialokinin (85 aa).

An N-terminal signal peptide occupies residues Met1 to Ser23. A propeptide spanning residues Leu24–Leu74 is cleaved from the precursor. Residues Thr26–Ser61 are disordered. Positions Ser52 to Ser61 are enriched in basic and acidic residues. Met84 is subject to Methionine amide.

This sequence belongs to the tachykinin family. In terms of tissue distribution, expressed exclusively in the medial lobe of female salivary gland. Not detected in female carcass without head and salivary glands. Not detected in male tissues.

The protein localises to the secreted. Its function is as follows. Vasodilatory peptide. Facilitates mosquito blood feeding on vertebrate host. Induces nitric oxide (NO) release in blood vessels through the activation of the nitric oxide synthase (NOS3). Enhances endothelial permeability and induces edema at the site of inoculation in the host. Induces host smooth muscle contraction. Down-regulates production of Th1 cytokines, such as IL2 and IFN-gamma (IFNG), in mouse splenocytes. Up-regulates production of Th2 cytokines, such as IL4 and IL10, in mouse splenocytes. Promotes recruitment of host leukocytes, especially neutrophils and CD8+ T cells, to the bite site. Modulates cytokine production by host macrophages. Modulates populations of monocytes/macrophages, plasmacytoid dendritic cells, B cells, CD4+ T cells, NK and NKT cells, shifting mammalian immunity towards Th2 responses. Functionally, (Microbial infection) Promotes Semliki Forest virus infection in the host. In terms of biological role, (Microbial infection) Does not affect Zika virus replication in the host. This is Prosialokinin from Aedes aegypti (Yellowfever mosquito).